Consider the following 906-residue polypeptide: Serine-aspartate repeat-containing protein C (906 aa).

Positions 1-50 (MNNKKTATNRKGMIPNRLNKFSIRKYSVGTASILVGTTLIFGLSGHEAKA) are cleaved as a signal peptide. Positions 51 to 127 (AEHTNGELNQ…QPTKKNNDAT (77 aa)) are disordered. The ligand binding A region stretch occupies residues 51–486 (AEHTNGELNQ…GSSTANGDQK (436 aa)). Polar residues-rich tracts occupy residues 56 to 71 (GELNQSKNEATAPSEN) and 80 to 119 (RQQNNVEQSTTSNQPKVNESDNTSVKETTEEPQNTTSTQP). 2 CNA-B domains span residues 487-597 (KYNL…YKTP) and 598-708 (KYSL…EEET). Residues 669–881 (KQTGTNTTED…TGSENNGSNN (213 aa)) form a disordered region. Acidic residues-rich tracts occupy residues 676-686 (TEDDKDADGGE) and 703-845 (YFEE…DSDS). Residues 869–873 (LPETG) carry the LPXTG sorting signal motif. Thr872 bears the Pentaglycyl murein peptidoglycan amidated threonine mark. Positions 873 to 906 (GSENNGSNNATLFGGLFAALGSLLLFGRRKKQNK) are cleaved as a propeptide — removed by sortase.

It belongs to the serine-aspartate repeat-containing protein (SDr) family. As to quaternary structure, homodimerizes; via N2-Domain. Interacts with host NRXN1; this interaction mediates bacterial attachment to host cells.

It is found in the secreted. Its subcellular location is the cell wall. Functionally, cell surface-associated calcium-binding protein which plays an important role in adhesion and pathogenesis. Mediates interactions with components of the extracellular matrix such as host NRXN1 to promote bacterial adhesion. This is Serine-aspartate repeat-containing protein C (sdrC) from Staphylococcus aureus (strain MRSA252).